The following is a 195-amino-acid chain: ATP-dependent Clp protease proteolytic subunit (195 aa).

Ser98 acts as the Nucleophile in catalysis. Residue His123 is part of the active site.

This sequence belongs to the peptidase S14 family. In terms of assembly, fourteen ClpP subunits assemble into 2 heptameric rings which stack back to back to give a disk-like structure with a central cavity, resembling the structure of eukaryotic proteasomes.

It localises to the cytoplasm. The catalysed reaction is Hydrolysis of proteins to small peptides in the presence of ATP and magnesium. alpha-casein is the usual test substrate. In the absence of ATP, only oligopeptides shorter than five residues are hydrolyzed (such as succinyl-Leu-Tyr-|-NHMec, and Leu-Tyr-Leu-|-Tyr-Trp, in which cleavage of the -Tyr-|-Leu- and -Tyr-|-Trp bonds also occurs).. In terms of biological role, cleaves peptides in various proteins in a process that requires ATP hydrolysis. Has a chymotrypsin-like activity. Plays a major role in the degradation of misfolded proteins. This chain is ATP-dependent Clp protease proteolytic subunit, found in Caldanaerobacter subterraneus subsp. tengcongensis (strain DSM 15242 / JCM 11007 / NBRC 100824 / MB4) (Thermoanaerobacter tengcongensis).